A 424-amino-acid polypeptide reads, in one-letter code: GTPase Obg (424 aa).

The region spanning 1–160 (MFDRVEINIK…YDLILELKLI (160 aa)) is the Obg domain. In terms of domain architecture, OBG-type G spans 161-328 (ADVAIIGYPN…LLAKVAEKLD (168 aa)). Residues 167-174 (GYPNVGKS), 192-196 (FTTLS), 213-216 (EVPG), 280-283 (NKID), and 309-311 (SAL) each bind GTP. Residues Ser174 and Thr194 each coordinate Mg(2+). Positions 349 to 424 (PAPKGKMGFR…IITGRMEWYL (76 aa)) constitute an OCT domain.

The protein belongs to the TRAFAC class OBG-HflX-like GTPase superfamily. OBG GTPase family. As to quaternary structure, monomer. Requires Mg(2+) as cofactor.

It localises to the cytoplasm. Its function is as follows. An essential GTPase which binds GTP, GDP and possibly (p)ppGpp with moderate affinity, with high nucleotide exchange rates and a fairly low GTP hydrolysis rate. Plays a role in control of the cell cycle, stress response, ribosome biogenesis and in those bacteria that undergo differentiation, in morphogenesis control. In Dehalococcoides mccartyi (strain ATCC BAA-2100 / JCM 16839 / KCTC 5957 / BAV1), this protein is GTPase Obg.